Reading from the N-terminus, the 447-residue chain is Hemopexin (447 aa).

Residues 1 to 18 (MRLIQALSLCLALSLSLA) form the signal peptide. The disordered stretch occupies residues 20 to 44 (PPQHKEDHSHKGKPGGEGHKHELHH). The segment covering 22–44 (QHKEDHSHKGKPGGEGHKHELHH) has biased composition (basic and acidic residues). Hemopexin repeat units follow at residues 53–93 (GIEF…FPEL), 99–151 (LGHV…FPGI), 152–197 (PDHL…FKSM), 198–243 (PNCT…FMRC), 262–304 (RVHL…FKEL), 305–351 (HSEV…VLGI), 352–395 (EGPV…TITQ), and 396–441 (FKRI…VSQQ). N-linked (GlcNAc...) asparagine glycosylation occurs at asparagine 87. 2 N-linked (GlcNAc...) asparagine glycosylation sites follow: asparagine 168 and asparagine 199. Histidine 293 serves as a coordination point for heme.

The protein belongs to the hemopexin family.

The protein resides in the secreted. In terms of biological role, binds heme and transports it to the liver for breakdown and iron recovery, after which the free hemopexin returns to the circulation. In Danio rerio (Zebrafish), this protein is Hemopexin.